The primary structure comprises 377 residues: Histone deacetylase 8 (377 aa).

Residues 5-336 are histone deacetylase; that stretch reads RVDVFWHEGM…LHAMLEGVLK (332 aa). Residue histidine 145 is the Proton donor/acceptor of the active site. Positions 182, 184, and 274 each coordinate Zn(2+).

Belongs to the histone deacetylase family. Zn(2+) serves as cofactor. In terms of tissue distribution, expressed in stems, leaves, flowers, siliques and mature seeds.

The protein resides in the nucleus. It localises to the cytoplasm. The enzyme catalyses N(6)-acetyl-L-lysyl-[histone] + H2O = L-lysyl-[histone] + acetate. In terms of biological role, responsible for the deacetylation of lysine residues on the N-terminal part of the core histones (H2A, H2B, H3 and H4). Histone deacetylation gives a tag for epigenetic repression and plays an important role in transcriptional regulation, cell cycle progression and developmental events. Histone deacetylases act via the formation of large multiprotein complexes. The polypeptide is Histone deacetylase 8 (Arabidopsis thaliana (Mouse-ear cress)).